A 648-amino-acid polypeptide reads, in one-letter code: Wilms tumor protein 1-interacting protein homolog (648 aa).

3 disordered regions span residues 27–56, 142–291, and 306–327; these read DGMYGEPNPDMEKTKRMNGSSSTPGNKVYS, SNSL…SPRS, and SPRSSISSHSSRSSRSSRGSMS. 2 stretches are compositionally biased toward low complexity: residues 158–171 and 178–192; these read SPRSSLASSHSSQD and PRSSISSPRSSLVSP. 2 stretches are compositionally biased toward polar residues: residues 197–213 and 220–241; these read GTSVISPRSSYASTASD and PRTSLNSYDCGSKPSSNRTSGI. Residues 252–267 are compositionally biased toward low complexity; that stretch reads PRSSTTSPRSSYSDSR. LIM zinc-binding domains follow at residues 437–498, 502–561, and 562–631; these read GICV…SGFQ, EKCF…TVFA, and PKCA…RLKT.

It belongs to the zyxin/ajuba family.

It localises to the cell junction. It is found in the adherens junction. The protein resides in the nucleus. May monitor slit diaphragm protein assembly, a specialized adherens junction characteristic of podocytes. In case of podocyte injury, it shuttles into the nucleus and acts as a transcription regulator. Plays a role in the regulation of cell morphology and cytoskeletal organization. Acts as a transcriptional corepressor for snai1 and snai2/slug and plays a role in regulating neural crest development. The sequence is that of Wilms tumor protein 1-interacting protein homolog (wtip) from Danio rerio (Zebrafish).